The chain runs to 230 residues: Porin OmpL (230 aa).

A signal peptide spans 1 to 20 (MKSLNTLVILTSVISTSVFA).

The protein belongs to the oligogalacturonate-specific porin KdgM (TC 1.B.35) family. OmpL subfamily.

The protein resides in the cell outer membrane. Its function is as follows. Outer membrane channel protein that allows an efficient diffusion of low-molecular-weight solutes such as small sugars and tetraglycine. However, the specific substrate recognized by the OmpL channel is unknown. This chain is Porin OmpL (ompL), found in Salmonella paratyphi A (strain ATCC 9150 / SARB42).